Here is a 286-residue protein sequence, read N- to C-terminus: NFU1 iron-sulfur cluster scaffold homolog, mitochondrial (286 aa).

A mitochondrion-targeting transit peptide spans 1-66; the sequence is MSKLLTNTAL…RQIQLSGARN (66 aa). The interval 182–250 is nifU; sequence IKELLDTRIR…IPEVESVEQV (69 aa). The [4Fe-4S] cluster site is built by Cys-219 and Cys-222.

Belongs to the NifU family.

Its subcellular location is the mitochondrion. Molecular scaffold for [Fe-S] cluster assembly of mitochondrial iron-sulfur proteins. The sequence is that of NFU1 iron-sulfur cluster scaffold homolog, mitochondrial from Drosophila ananassae (Fruit fly).